The sequence spans 836 residues: Protein O-mannosyl-transferase tmtc2 (836 aa).

A helical transmembrane segment spans residues 1-21 (MIAELLSSALGLLLYLNTLGA). The Extracellular portion of the chain corresponds to 22 to 77 (DFCYDDSRAIKTNQDLLPETPWNHIFFNDFWGTLLTHSGSHKSYRPLCTLSFRLNY). The helical transmembrane segment at 78-98 (LFGGLDPWNYHLVNVLLHSAV) threads the bilayer. Residues 99–107 (TGLFTNLCK) are Cytoplasmic-facing. A helical membrane pass occupies residues 108 to 128 (ALFGSGCWTLIAGLLFASHPI). The Extracellular segment spans residues 129-132 (HTEA). A helical transmembrane segment spans residues 133–153 (VSGIVGRADVGSGLFFLLSLL). Over 154–164 (CYMKHCSTRGY) the chain is Cytoplasmic. Residues 165–185 (SLSSWCWILCAGFWAACSMLW) form a helical membrane-spanning segment. The Extracellular portion of the chain corresponds to 186–188 (KEQ). A helical transmembrane segment spans residues 189-209 (GVTVLAVSAVYDVFVFHKLKM). Over 210–220 (NQIISVVFKEK) the chain is Cytoplasmic. The chain crosses the membrane as a helical span at residues 221–241 (NVSFFFSVGLLFAWGVILLGA). At 242–312 (RFYWMGNTPP…KTITDWRNIH (71 aa)) the chain is on the extracellular side. Residues 313-333 (TVAFYILLILLAYSSLKGSAI) form a helical membrane-spanning segment. Residues 334–392 (KRDCNGKVFMNGKQNTNGHSCQSDLEHKNAEQNPVIASKLENGVKHHNSHEMQLPSTEN) are Cytoplasmic-facing. A helical transmembrane segment spans residues 393–413 (IVVLALSLLIVPFVPASNLFF). Y414 is a topological domain (extracellular). Residues 415–435 (VGFVIAERVLYIPSMGFCLLV) traverse the membrane as a helical segment. The Cytoplasmic portion of the chain corresponds to 436–449 (TVGARALYIKAQKN). A helical transmembrane segment spans residues 450–470 (ILKNLLFYATAALIVFYGLKT). Residues 471 to 836 (VVRNGDWKNE…EKQGLKNSKT (366 aa)) are Extracellular-facing. TPR repeat units follow at residues 493–526 (AKAWGNLGNVLKSQSKIDEAENAYRNALYYRSNM), 527–560 (ADMLYNLGLLLQENSKFSEALHYYKLAIGSRPTL), 561–594 (ASGYLNTGIILMNQGRTEEARRTFLKCSEIPDEN), 606–639 (TSCLYNLGKLYHEQGQYEDALIVYKEAIQKMPRQ), 643–676 (QSLYNMMGEAYMRLNVVSEAEHWYTESLKSKPDH), 677–710 (IPAHLTYGKLLTLTGRKNEAERYFLKAIQLDPNK), 711–744 (GNCYMHYGQFLLEEGRILEAAEMAKKAAELDSSE), 745–778 (FDVVFNAAHMLRQASLNEEAEKFYKLAAGLRQNY), and 779–812 (PAALMNLGAILHLNGKLEEAEYNYLRALQLKPDD).

It belongs to the TMTC family.

It localises to the membrane. The protein resides in the endoplasmic reticulum. The catalysed reaction is a di-trans,poly-cis-dolichyl beta-D-mannosyl phosphate + L-seryl-[protein] = 3-O-(alpha-D-mannosyl)-L-seryl-[protein] + a di-trans,poly-cis-dolichyl phosphate + H(+). It carries out the reaction a di-trans,poly-cis-dolichyl beta-D-mannosyl phosphate + L-threonyl-[protein] = 3-O-(alpha-D-mannosyl)-L-threonyl-[protein] + a di-trans,poly-cis-dolichyl phosphate + H(+). It participates in protein modification; protein glycosylation. Functionally, transfers mannosyl residues to the hydroxyl group of serine or threonine residues. In Xenopus laevis (African clawed frog), this protein is Protein O-mannosyl-transferase tmtc2 (tmtc2).